A 94-amino-acid polypeptide reads, in one-letter code: Beta-defensin 132 (94 aa).

The N-terminal stretch at 1–22 is a signal peptide; that stretch reads MKFLLLVLAALGFLTQVIPASA. 2 cysteine pairs are disulfide-bonded: C27-C55 and C39-C56. A disordered region spans residues 72–94; it reads GNHWQSRRNTQRKDKKQQTTVTS. The segment covering 76-86 has biased composition (basic residues); sequence QSRRNTQRKDK.

The protein belongs to the beta-defensin family.

It localises to the secreted. Has antibacterial activity. This is Beta-defensin 132 (DEFB132) from Gorilla gorilla gorilla (Western lowland gorilla).